We begin with the raw amino-acid sequence, 478 residues long: Serine/threonine-protein phosphatase T (478 aa).

TPR repeat units follow at residues 9–42 (ATAL…YDRE), 43–76 (PSFF…DPAY), and 78–110 (KAYW…EPNN). A catalytic region spans residues 151 to 463 (AVDDSYDGVR…QVFEAVPHPD (313 aa)). Residues aspartate 221, histidine 223, aspartate 250, and asparagine 282 each coordinate Mn(2+). The active-site Proton donor/acceptor is the histidine 283. Mn(2+) is bound by residues histidine 331 and histidine 408.

The protein belongs to the PPP phosphatase family. PP-5 (PP-T) subfamily. Mg(2+) serves as cofactor. Requires Mn(2+) as cofactor.

The protein localises to the nucleus. The catalysed reaction is O-phospho-L-seryl-[protein] + H2O = L-seryl-[protein] + phosphate. It carries out the reaction O-phospho-L-threonyl-[protein] + H2O = L-threonyl-[protein] + phosphate. Its function is as follows. Protein phosphatase that specifically binds to and dephosphorylates the molecular chaperone Hsp90. Dephosphorylation positively regulates the Hsp90 chaperone machinery. This is Serine/threonine-protein phosphatase T from Aspergillus oryzae (strain ATCC 42149 / RIB 40) (Yellow koji mold).